A 93-amino-acid polypeptide reads, in one-letter code: Defensin-like protein 209 (93 aa).

Positions 1–19 are cleaved as a signal peptide; that stretch reads MKITILFLTLLVLSSSCTS. Intrachain disulfides connect C63-C80, C66-C85, and C70-C87.

The protein belongs to the DEFL family.

Its subcellular location is the secreted. In Arabidopsis thaliana (Mouse-ear cress), this protein is Defensin-like protein 209.